Reading from the N-terminus, the 293-residue chain is DNA repair protein RecO (293 aa).

Belongs to the RecO family.

In terms of biological role, involved in DNA repair and RecF pathway recombination. This Acaryochloris marina (strain MBIC 11017) protein is DNA repair protein RecO.